The chain runs to 1061 residues: Carbamoyl phosphate synthase large chain (1061 aa).

The interval 1–401 (MPKRTDVHKI…ALQKAVRSLE (401 aa)) is carboxyphosphate synthetic domain. Arg129, Arg169, Gly175, Gly176, Lys208, Ile210, Glu215, Gly241, Ile242, His243, Gln284, and Glu298 together coordinate ATP. The 195-residue stretch at 133–327 (KDLMQELNEP…IAKLAAKIAV (195 aa)) folds into the ATP-grasp 1 domain. Positions 284, 298, and 300 each coordinate Mg(2+). Mn(2+) contacts are provided by Gln284, Glu298, and Asn300. The interval 402–546 (IDEKDLISAK…YSSYDLENES (145 aa)) is oligomerization domain. Residues 547 to 929 (KKSDKKSVLV…ALYKAFTGAK (383 aa)) form a carbamoyl phosphate synthetic domain region. Residues 671–861 (DQTIKNLGLK…MAQVATRVIL (191 aa)) form the ATP-grasp 2 domain. Residues Arg707, Ala746, Leu748, Glu752, Gly777, Val778, His779, Ser780, Gln820, and Glu832 each contribute to the ATP site. Gln820, Glu832, and Asn834 together coordinate Mg(2+). Mn(2+) contacts are provided by Gln820, Glu832, and Asn834. Residues 930-1061 (MELPDNGNVL…ENRSFATNSL (132 aa)) form the MGS-like domain. An allosteric domain region spans residues 930-1061 (MELPDNGNVL…ENRSFATNSL (132 aa)).

It belongs to the CarB family. In terms of assembly, composed of two chains; the small (or glutamine) chain promotes the hydrolysis of glutamine to ammonia, which is used by the large (or ammonia) chain to synthesize carbamoyl phosphate. Tetramer of heterodimers (alpha,beta)4. Requires Mg(2+) as cofactor. Mn(2+) serves as cofactor.

It carries out the reaction hydrogencarbonate + L-glutamine + 2 ATP + H2O = carbamoyl phosphate + L-glutamate + 2 ADP + phosphate + 2 H(+). The enzyme catalyses hydrogencarbonate + NH4(+) + 2 ATP = carbamoyl phosphate + 2 ADP + phosphate + 2 H(+). It participates in amino-acid biosynthesis; L-arginine biosynthesis; carbamoyl phosphate from bicarbonate: step 1/1. Its pathway is pyrimidine metabolism; UMP biosynthesis via de novo pathway; (S)-dihydroorotate from bicarbonate: step 1/3. Its function is as follows. Large subunit of the glutamine-dependent carbamoyl phosphate synthetase (CPSase). CPSase catalyzes the formation of carbamoyl phosphate from the ammonia moiety of glutamine, carbonate, and phosphate donated by ATP, constituting the first step of 2 biosynthetic pathways, one leading to arginine and/or urea and the other to pyrimidine nucleotides. The large subunit (synthetase) binds the substrates ammonia (free or transferred from glutamine from the small subunit), hydrogencarbonate and ATP and carries out an ATP-coupled ligase reaction, activating hydrogencarbonate by forming carboxy phosphate which reacts with ammonia to form carbamoyl phosphate. This chain is Carbamoyl phosphate synthase large chain, found in Ligilactobacillus salivarius (strain UCC118) (Lactobacillus salivarius).